The chain runs to 104 residues: 2,4-dinitrotoluene dioxygenase system, ferredoxin component (104 aa).

The tract at residues 1–21 is disordered; sequence MSENWIDAAARDEVPRGRRDR. Positions 5–101 constitute a Rieske domain; that stretch reads WIDAAARDEV…VKIENMRVML (97 aa). [2Fe-2S] cluster contacts are provided by C45, H47, C64, and H67.

This sequence belongs to the bacterial ring-hydroxylating dioxygenase ferredoxin component family. As to quaternary structure, the 2,4-dinitrotoluene dioxygenase (DNTDO) multicomponent enzyme system is composed of an electron transfer component and a dioxygenase component (iron sulfur protein (ISP)). The electron transfer component is composed of a ferredoxin reductase (DntAa) and a ferredoxin (DntAb), and the dioxygenase component is formed of a large alpha subunit (DntAc) and a small beta subunit (DntAd). [2Fe-2S] cluster serves as cofactor.

Its function is as follows. Component of the 2,4-dinitrotoluene dioxygenase (DNTDO) multicomponent enzyme system which catalyzes the incorporation of both atoms of molecular oxygen into 2,4-dinitrotoluene (DNT) to form 4-methyl-5-nitrocatechol (MNC) and nitrite. Functions as an intermediate electron transfer protein via a specific interaction with iron sulfur protein components (ISP)(DntAc and DntAd). Also able to convert naphthalene to cis-(1R,2S)-dihydroxy-1,2-dihydronaphthalene. This chain is 2,4-dinitrotoluene dioxygenase system, ferredoxin component, found in Burkholderia sp. (strain RASC).